The following is a 141-amino-acid chain: Hemoglobin subunit alpha-1 (141 aa).

Positions 1–141 (VLSGSDKNNV…VGNVLTAKYR (141 aa)) constitute a Globin domain. Residue His-58 coordinates O2. His-87 provides a ligand contact to heme b.

This sequence belongs to the globin family. As to quaternary structure, heterotetramer of two alpha chains and two beta chains. In terms of tissue distribution, red blood cells.

In terms of biological role, involved in oxygen transport from the lung to the various peripheral tissues. The sequence is that of Hemoglobin subunit alpha-1 from Stercorarius maccormicki (South polar skua).